The primary structure comprises 187 residues: Accessory gene regulator protein B (187 aa).

5 consecutive transmembrane segments (helical) span residues 49–69 (ISIF…YMLI), 82–102 (ILCY…LINI), 106–126 (FTYL…YAPA), 144–164 (VSII…PFYA), and 166–186 (FMLL…FPKE).

The protein belongs to the AgrB family.

The protein localises to the cell membrane. In terms of biological role, essential for the production of a quorum sensing system signal molecule, the autoinducing peptide (AIP). This quorum sensing system is responsible for the regulation of the expression of virulence factor genes. Involved in the proteolytic processing of AgrD, the precursor of AIP. The protein is Accessory gene regulator protein B of Staphylococcus aureus (strain bovine RF122 / ET3-1).